A 221-amino-acid chain; its full sequence is Elongation factor Ts (221 aa).

Residues 82 to 85 (TDFV) are involved in Mg(2+) ion dislocation from EF-Tu.

This sequence belongs to the EF-Ts family.

The protein resides in the cytoplasm. Associates with the EF-Tu.GDP complex and induces the exchange of GDP to GTP. It remains bound to the aminoacyl-tRNA.EF-Tu.GTP complex up to the GTP hydrolysis stage on the ribosome. In Synechococcus elongatus (strain ATCC 33912 / PCC 7942 / FACHB-805) (Anacystis nidulans R2), this protein is Elongation factor Ts.